Reading from the N-terminus, the 515-residue chain is MTTSIFTLTPGKITLSDLRDFYFGQMDVRLDDGTFEALQRAAESVERIVGRGEPVYGVNTGFGKLAKTRIPDDRLRDLQRNLVLSHAAGIGQPMPERVVRLILLLKANGLARGYSGVRPQIVQLLLDMLNQGVVPVIPEKGSVGASGDLAPLAHMSAVVIGEGEAFYQGKRLKGDEALKAAGLEPLVLGAKEGLALLNGTQASTALAIAALLDAERLFHAALITGGLTLDAARGTDAPFDPRLHELRGQKGQIECAAVYRALMQGSAIRASHLEDDERVQDPYCLRCQPQVMGACLDNLRQAARVLVIEANAVSDNPIHFPDTDEMISGGNFHAEPVAIAADLMAIAVSEVGAIAERRLALLVDAQMSGLPPFLVQDSGLNSGFMIAQVTAAALASENKTLAHPASVDSLPTSANQEDHVSMATFAARRVGDIVDNVRTIIAVEYLAAVQGLDFLAPLETSAPLLEVAKTLRKTVPFFAQDRLFTPDMEAARALIIDGALGSCVGSGVALPALEG.

The segment at residues Ala145 to Gly147 is a cross-link (5-imidazolinone (Ala-Gly)). Ser146 carries the 2,3-didehydroalanine (Ser) modification.

This sequence belongs to the PAL/histidase family. Contains an active site 4-methylidene-imidazol-5-one (MIO), which is formed autocatalytically by cyclization and dehydration of residues Ala-Ser-Gly.

It localises to the cytoplasm. It catalyses the reaction L-histidine = trans-urocanate + NH4(+). The protein operates within amino-acid degradation; L-histidine degradation into L-glutamate; N-formimidoyl-L-glutamate from L-histidine: step 1/3. The sequence is that of Histidine ammonia-lyase from Gluconobacter oxydans (strain 621H) (Gluconobacter suboxydans).